Reading from the N-terminus, the 498-residue chain is Probable cytosol aminopeptidase (498 aa).

Positions 264 and 269 each coordinate Mn(2+). The active site involves K276. 3 residues coordinate Mn(2+): D287, D346, and E348. R350 is an active-site residue.

This sequence belongs to the peptidase M17 family. It depends on Mn(2+) as a cofactor.

The protein resides in the cytoplasm. It catalyses the reaction Release of an N-terminal amino acid, Xaa-|-Yaa-, in which Xaa is preferably Leu, but may be other amino acids including Pro although not Arg or Lys, and Yaa may be Pro. Amino acid amides and methyl esters are also readily hydrolyzed, but rates on arylamides are exceedingly low.. The catalysed reaction is Release of an N-terminal amino acid, preferentially leucine, but not glutamic or aspartic acids.. In terms of biological role, presumably involved in the processing and regular turnover of intracellular proteins. Catalyzes the removal of unsubstituted N-terminal amino acids from various peptides. The chain is Probable cytosol aminopeptidase from Xanthobacter autotrophicus (strain ATCC BAA-1158 / Py2).